The sequence spans 587 residues: Arginine--tRNA ligase (587 aa).

The 'HIGH' region motif lies at 127-137 (PNLAKEMHVGH).

The protein belongs to the class-I aminoacyl-tRNA synthetase family. Monomer.

Its subcellular location is the cytoplasm. The enzyme catalyses tRNA(Arg) + L-arginine + ATP = L-arginyl-tRNA(Arg) + AMP + diphosphate. The chain is Arginine--tRNA ligase from Pseudomonas aeruginosa (strain UCBPP-PA14).